The sequence spans 149 residues: Transcriptional repressor NrdR (149 aa).

A zinc finger spans residues 3 to 34; it reads CPFCGTQDTKVIDSRLVADGASVRRRRECNHC. In terms of domain architecture, ATP-cone spans 49–139; that stretch reads PRVIKTDGSR…VYRSFEDIRE (91 aa).

This sequence belongs to the NrdR family. Zn(2+) serves as cofactor.

Negatively regulates transcription of bacterial ribonucleotide reductase nrd genes and operons by binding to NrdR-boxes. The polypeptide is Transcriptional repressor NrdR (Idiomarina loihiensis (strain ATCC BAA-735 / DSM 15497 / L2-TR)).